A 143-amino-acid polypeptide reads, in one-letter code: Nucleoside diphosphate kinase (143 aa).

The ATP site is built by Lys11, Phe59, Arg87, Thr93, Arg104, and Asn114. His117 serves as the catalytic Pros-phosphohistidine intermediate.

It belongs to the NDK family. As to quaternary structure, homotetramer. Mg(2+) is required as a cofactor.

The protein localises to the cytoplasm. It catalyses the reaction a 2'-deoxyribonucleoside 5'-diphosphate + ATP = a 2'-deoxyribonucleoside 5'-triphosphate + ADP. The enzyme catalyses a ribonucleoside 5'-diphosphate + ATP = a ribonucleoside 5'-triphosphate + ADP. Major role in the synthesis of nucleoside triphosphates other than ATP. The ATP gamma phosphate is transferred to the NDP beta phosphate via a ping-pong mechanism, using a phosphorylated active-site intermediate. This chain is Nucleoside diphosphate kinase, found in Klebsiella pneumoniae (strain 342).